Consider the following 359-residue polypeptide: Cyclic AMP response element-binding protein B (359 aa).

Disordered stretches follow at residues 1-73 and 185-238; these read MDNS…AQGG and VRNK…FTEI. Residues 9–32 show a composition bias toward low complexity; that stretch reads NGNSSAASGSNDVVDVVAQQAAAA. Residues 33–47 show a composition bias toward gly residues; sequence VGGGGGGGGGGGGGN. The span at 48 to 70 shows a compositional bias: low complexity; sequence PQQQQQNPQSTTAGGPTGATNNA. Residues 198–257 enclose the KID domain; it reads KPEPNTQHPEDSDESLSDDDSQHHRSELTRRPSYNKIFTEISGPDMSGASLPMSDGVLNS. Ser209, Ser212, and Ser214 each carry phosphoserine. Residues 217-227 show a composition bias toward basic and acidic residues; that stretch reads DSQHHRSELTR. The region spanning 300–359 is the bZIP domain; it reads TRKREIRLQKNREAARECRRKKKEYIKCLENRVAVLENQNKALIEELKSLKELYCQTKND. Residues 301–326 form a basic motif region; that stretch reads RKREIRLQKNREAARECRRKKKEYIK. The segment at 328 to 349 is leucine-zipper; the sequence is LENRVAVLENQNKALIEELKSL.

Belongs to the bZIP family. ATF subfamily. In terms of assembly, homodimer. As to expression, most cells of the adult brain; cell bodies, but not neuropil.

The protein localises to the nucleus. Functionally, isoform E is a PKA-dependent transcriptional activator. Isoform J is a direct antagonist of activation by isoform E in cell culture. Binds the cAMP response element (CRE) (consensus: 5'-GTGACGT[AC][AG]-3'), a sequence present in many viral and cellular promoters. Has a role in long-term memory. The polypeptide is Cyclic AMP response element-binding protein B (Drosophila melanogaster (Fruit fly)).